Consider the following 511-residue polypeptide: Mannosyl-oligosaccharide alpha-1,2-mannosidase (511 aa).

Residues 1-35 (MRLPVSFPLTVLSLLGSTIAHPYGETEAVLRSEPK) form the signal peptide. N-linked (GlcNAc...) asparagine glycosylation is present at Asn182. The cysteines at positions 332 and 361 are disulfide-linked. A glycan (N-linked (GlcNAc...) asparagine) is linked at Asn366. Asp375 serves as the catalytic Proton donor. Asn438 is a glycosylation site (N-linked (GlcNAc...) asparagine). Position 501 (Thr501) interacts with Ca(2+).

Belongs to the glycosyl hydrolase 47 family. In terms of assembly, homodimer. Ca(2+) is required as a cofactor.

The protein resides in the secreted. It catalyses the reaction N(4)-(alpha-D-Man-(1-&gt;2)-alpha-D-Man-(1-&gt;2)-alpha-D-Man-(1-&gt;3)-[alpha-D-Man-(1-&gt;2)-alpha-D-Man-(1-&gt;3)-[alpha-D-Man-(1-&gt;2)-alpha-D-Man-(1-&gt;6)]-alpha-D-Man-(1-&gt;6)]-beta-D-Man-(1-&gt;4)-beta-D-GlcNAc-(1-&gt;4)-beta-D-GlcNAc)-L-asparaginyl-[protein] (N-glucan mannose isomer 9A1,2,3B1,2,3) + 4 H2O = N(4)-(alpha-D-Man-(1-&gt;3)-[alpha-D-Man-(1-&gt;3)-[alpha-D-Man-(1-&gt;6)]-alpha-D-Man-(1-&gt;6)]-beta-D-Man-(1-&gt;4)-beta-D-GlcNAc-(1-&gt;4)-beta-D-GlcNAc)-L-asparaginyl-[protein] (N-glucan mannose isomer 5A1,2) + 4 beta-D-mannose. It carries out the reaction N(4)-(alpha-D-Man-(1-&gt;2)-alpha-D-Man-(1-&gt;2)-alpha-D-Man-(1-&gt;3)-[alpha-D-Man-(1-&gt;3)-[alpha-D-Man-(1-&gt;2)-alpha-D-Man-(1-&gt;6)]-alpha-D-Man-(1-&gt;6)]-beta-D-Man-(1-&gt;4)-beta-D-GlcNAc-(1-&gt;4)-beta-D-GlcNAc)-L-asparaginyl-[protein] (N-glucan mannose isomer 8A1,2,3B1,3) + 3 H2O = N(4)-(alpha-D-Man-(1-&gt;3)-[alpha-D-Man-(1-&gt;3)-[alpha-D-Man-(1-&gt;6)]-alpha-D-Man-(1-&gt;6)]-beta-D-Man-(1-&gt;4)-beta-D-GlcNAc-(1-&gt;4)-beta-D-GlcNAc)-L-asparaginyl-[protein] (N-glucan mannose isomer 5A1,2) + 3 beta-D-mannose. It participates in protein modification; protein glycosylation. Functionally, involved in the maturation of Asn-linked oligosaccharides. Progressively trim alpha-1,2-linked mannose residues from Man(9)GlcNAc(2) to produce Man(5)GlcNAc(2). The sequence is that of Mannosyl-oligosaccharide alpha-1,2-mannosidase (MSDC) from Penicillium citrinum.